Consider the following 348-residue polypeptide: Holliday junction branch migration complex subunit RuvB (348 aa).

The large ATPase domain (RuvB-L) stretch occupies residues 1–181; sequence MEERMITPQQ…FGVISRLEFY (181 aa). ATP is bound by residues Leu20, Arg21, Gly62, Lys65, Thr66, Thr67, Arg171, Tyr181, and Arg218. Thr66 provides a ligand contact to Mg(2+). A small ATPAse domain (RuvB-S) region spans residues 182-252; sequence EVEDLIRIIT…LAGKSLDRLE (71 aa). Positions 255-348 are head domain (RuvB-H); the sequence is PAGLDRIDQK…GDSLFDAAED (94 aa). Residues Arg310 and Arg315 each contribute to the DNA site. The disordered stretch occupies residues 329-348; the sequence is VNSSHQEGGQGDSLFDAAED.

It belongs to the RuvB family. In terms of assembly, homohexamer. Forms an RuvA(8)-RuvB(12)-Holliday junction (HJ) complex. HJ DNA is sandwiched between 2 RuvA tetramers; dsDNA enters through RuvA and exits via RuvB. An RuvB hexamer assembles on each DNA strand where it exits the tetramer. Each RuvB hexamer is contacted by two RuvA subunits (via domain III) on 2 adjacent RuvB subunits; this complex drives branch migration. In the full resolvosome a probable DNA-RuvA(4)-RuvB(12)-RuvC(2) complex forms which resolves the HJ.

It localises to the cytoplasm. The catalysed reaction is ATP + H2O = ADP + phosphate + H(+). The RuvA-RuvB-RuvC complex processes Holliday junction (HJ) DNA during genetic recombination and DNA repair, while the RuvA-RuvB complex plays an important role in the rescue of blocked DNA replication forks via replication fork reversal (RFR). RuvA specifically binds to HJ cruciform DNA, conferring on it an open structure. The RuvB hexamer acts as an ATP-dependent pump, pulling dsDNA into and through the RuvAB complex. RuvB forms 2 homohexamers on either side of HJ DNA bound by 1 or 2 RuvA tetramers; 4 subunits per hexamer contact DNA at a time. Coordinated motions by a converter formed by DNA-disengaged RuvB subunits stimulates ATP hydrolysis and nucleotide exchange. Immobilization of the converter enables RuvB to convert the ATP-contained energy into a lever motion, pulling 2 nucleotides of DNA out of the RuvA tetramer per ATP hydrolyzed, thus driving DNA branch migration. The RuvB motors rotate together with the DNA substrate, which together with the progressing nucleotide cycle form the mechanistic basis for DNA recombination by continuous HJ branch migration. Branch migration allows RuvC to scan DNA until it finds its consensus sequence, where it cleaves and resolves cruciform DNA. In Desulfitobacterium hafniense (strain DSM 10664 / DCB-2), this protein is Holliday junction branch migration complex subunit RuvB.